A 280-amino-acid polypeptide reads, in one-letter code: F-box only protein 27 (280 aa).

An F-box domain is found at 20-67 (VLDLSRLPPELLLLVLSHVPPRTLLMHCRRVCRAWRALVDGQALWLLL). Residues 101 to 277 (FCALRPLGRN…VTNSSVIIRV (177 aa)) enclose the FBA domain.

Part of a SCF (SKP1-cullin-F-box) protein ligase complex. Interacts with SKP1 and CUL1. Detected in brain, heart and muscle.

Functionally, substrate-recognition component of the SCF (SKP1-CUL1-F-box protein)-type E3 ubiquitin ligase complex. Able to recognize and bind complex-type oligosaccharides. This chain is F-box only protein 27 (Fbxo27), found in Mus musculus (Mouse).